Reading from the N-terminus, the 145-residue chain is Transcription antitermination protein NusB (145 aa).

Belongs to the NusB family.

Its function is as follows. Involved in transcription antitermination. Required for transcription of ribosomal RNA (rRNA) genes. Binds specifically to the boxA antiterminator sequence of the ribosomal RNA (rrn) operons. The chain is Transcription antitermination protein NusB from Thiobacillus denitrificans (strain ATCC 25259 / T1).